A 700-amino-acid chain; its full sequence is Small ribosomal subunit protein uS3c (700 aa).

2 insert regions span residues 88 to 196 (NCHM…LGKF) and 282 to 587 (KPCT…FQTR).

This sequence belongs to the universal ribosomal protein uS3 family. Part of the 30S ribosomal subunit.

The protein resides in the plastid. It is found in the chloroplast. The polypeptide is Small ribosomal subunit protein uS3c (rps3) (Tetradesmus obliquus (Green alga)).